The chain runs to 438 residues: Xylose isomerase (438 aa).

Active-site residues include histidine 103 and aspartate 106. The Mg(2+) site is built by glutamate 234, glutamate 270, histidine 273, aspartate 298, aspartate 309, aspartate 311, and aspartate 341.

The protein belongs to the xylose isomerase family. As to quaternary structure, homotetramer. Mg(2+) is required as a cofactor.

It localises to the cytoplasm. It catalyses the reaction alpha-D-xylose = alpha-D-xylulofuranose. This is Xylose isomerase from Phocaeicola vulgatus (strain ATCC 8482 / DSM 1447 / JCM 5826 / CCUG 4940 / NBRC 14291 / NCTC 11154) (Bacteroides vulgatus).